A 272-amino-acid chain; its full sequence is Dermonecrotic toxin StSicTox-betaIF1 (272 aa).

Residue His5 is part of the active site. Glu25 and Asp27 together coordinate Mg(2+). His41 (nucleophile) is an active-site residue. 2 disulfides stabilise this stretch: Cys45–Cys51 and Cys47–Cys189. Asp85 lines the Mg(2+) pocket.

It belongs to the arthropod phospholipase D family. Class II subfamily. Requires Mg(2+) as cofactor. As to expression, expressed by the venom gland.

It is found in the secreted. The enzyme catalyses an N-(acyl)-sphingosylphosphocholine = an N-(acyl)-sphingosyl-1,3-cyclic phosphate + choline. It catalyses the reaction an N-(acyl)-sphingosylphosphoethanolamine = an N-(acyl)-sphingosyl-1,3-cyclic phosphate + ethanolamine. The catalysed reaction is a 1-acyl-sn-glycero-3-phosphocholine = a 1-acyl-sn-glycero-2,3-cyclic phosphate + choline. It carries out the reaction a 1-acyl-sn-glycero-3-phosphoethanolamine = a 1-acyl-sn-glycero-2,3-cyclic phosphate + ethanolamine. Functionally, dermonecrotic toxins cleave the phosphodiester linkage between the phosphate and headgroup of certain phospholipids (sphingolipid and lysolipid substrates), forming an alcohol (often choline) and a cyclic phosphate. This toxin acts on sphingomyelin (SM). It may also act on ceramide phosphoethanolamine (CPE), lysophosphatidylcholine (LPC) and lysophosphatidylethanolamine (LPE), but not on lysophosphatidylserine (LPS), and lysophosphatidylglycerol (LPG). It acts by transphosphatidylation, releasing exclusively cyclic phosphate products as second products. Induces dermonecrosis, hemolysis, increased vascular permeability, edema, inflammatory response, and platelet aggregation. In Sicarius terrosus (Cave spider), this protein is Dermonecrotic toxin StSicTox-betaIF1.